Here is a 1481-residue protein sequence, read N- to C-terminus: MDVLELLRASANGCYNTIFSDAWSQYVSQQITSSLYLYIALGILTVLFVAWFIYFKRLARLRLRDEIARSLNAVTSASGGDLRGLRFRKRDKMLFYGRRMLRKMKNVSGQMYSSGKGYKRRAVMRFARRILQLRRENMPLEMRTVEPPAEYLEETIEGSDRVPPDALYMLQSIRIFGHFEKPVFLKLCKHTQVLELMAGDYLFKITDADDSVYIVQSGMINVYISNADGSTLSLKTVRKGESVTSLLSFIDVLSGNPSYYKTVTAKAMEKSVVIRLPMQAFEEVFRENPDVMIRVIQVIMIRLQRVLFTALRNYLGLNAELVQNHMRNKSITISGHLNSQSQSSQSMRQQTTATATGGTSATALGGQQLPAAVPSLPLQRQPPPPTIAPPLRHSREEHTLSGPNPNPNSGNNVQLPEVHGDAPNIDIYHQQQHGGSTSTGNLSTRRGSLVQPSIGGGGGGSTAQEGGCAAAGAPTIDMRLIQSSAVESLRKELGLPNEDAHIIEPFVEVRELEPNVTLITEGNADDVCIWFVMTGTLAVYQGVADATRSSTATTKSDKSDLLIHFVHPGEIVGGLAMLTGEASAYTIRSRNNSRVAYIRRAAIYQIMRQRPRIVLDLGNGVVRRLSPLVRQCDYALDWIFLESGRAVYRQDESSDSTYIVLSGRMRSVITNPGGKKEIVGEYGKGDLVGIVEMITETSRTTTVMAVRDSELAKLPEGLFNAIKLRYPIVVTKLISFLSHRFLGSMQTRGSTGAPGAPVEANPVTHKYSTVALVPITDEVPLTPFTYELYHSLCAIGPVLRLTSEVVRKQLGQNIFEAANEYRLTSWLAQQEDRNIITLYQCDNSLSPWTHRCMRQADVILIVGLGDRSHLVGKFEREIDRLAMRTQKELVLLYPETTNAKPANTLSWLNARPWVTKHHHVLCVKRIFTRKSQYRINDLYSRVLLSEPNMHSDFSRLARWLTGNSIGLVLGGGGARGAAHIGMLKAIQEAGIPIDMVGGVSIGALMGALWCSERNITTVTQKARQWSKKMTKWFLQLLDLTYPITSMFSGREFNKTIHDTFGDVSIEDLWIPYFTLTTDITASCHRIHTNGSLWRYVRSSMSLSGYMPPLCDPKDGHLLLDGGYVNNLPGHLWRYCRASMSIAGVFPPFCDYRDGHLLLDGCYTNNVPADVMHNLGAAHIIAIDVGSQDDTDLTNYGDDLSGWWLLYKKWNPFTSPVKVPDLPDIQSRLAYVSCVRQLEEVKNSDYCEYIRPPIDKYKTLAFGSFDEIRDVGYVFGKNYFESMAKAGRLGRFNQWFNKEPPKRGNHASLNEYTFIDLAQIVCKLPETYAVNTAEIFSEDEDCDGYISEPSTLNTDRRIQVPRAGNSLSLSEAEMDSDVEIDFRSDSKKDKATQSTPPAPGKDNEDKTDAVDRIPLLTLERPLTDQQQQHSDETDEQETPRAMKDGTNTMTTQTTSPTTDAGSEWAGSESELEKENKNVNTKN.

At 1–34 (MDVLELLRASANGCYNTIFSDAWSQYVSQQITSS) the chain is on the lumenal side. A helical transmembrane segment spans residues 35-55 (LYLYIALGILTVLFVAWFIYF). Topologically, residues 56–1481 (KRLARLRLRD…KENKNVNTKN (1426 aa)) are cytoplasmic. Residue 175-302 (IFGHFEKPVF…IRVIQVIMIR (128 aa)) participates in a nucleoside 3',5'-cyclic phosphate binding. The tract at residues 336 to 420 (HLNSQSQSSQ…NNVQLPEVHG (85 aa)) is disordered. Low complexity-rich tracts occupy residues 339-379 (SQSQ…LPLQ) and 401-412 (SGPNPNPNSGNN). Residue serine 448 is modified to Phosphoserine. Residues 492-624 (ELGL…VVRR) and 613-740 (IVLD…LSHR) each bind a nucleoside 3',5'-cyclic phosphate. Positions 967-1133 (LVLGGGGARG…VNNLPGHLWR (167 aa)) constitute a PNPLA domain. Residues 971–976 (GGGARG) carry the GXGXXG motif. The short motif at 998–1002 (GVSIG) is the GXSXG element. The active-site Nucleophile is the serine 1000. Residue aspartate 1120 is the Proton acceptor of the active site. A DGA/G motif is present at residues 1120 to 1122 (DGG). Residue serine 1214 is modified to Phosphoserine. Residues 1366–1481 (LSLSEAEMDS…KENKNVNTKN (116 aa)) form a disordered region. 2 stretches are compositionally biased toward basic and acidic residues: residues 1379 to 1390 (IDFRSDSKKDKA) and 1400 to 1410 (KDNEDKTDAVD). Residues 1445 to 1457 (TNTMTTQTTSPTT) are compositionally biased toward low complexity.

It belongs to the NTE family. Interacts with Pka-C3; interaction inhibits the catalytic function of Pka-C3 and the esterase activity of sws.

It is found in the endoplasmic reticulum membrane. The catalysed reaction is a 1-acyl-sn-glycero-3-phosphocholine + H2O = sn-glycerol 3-phosphocholine + a fatty acid + H(+). Functionally, phospholipase B that deacylates intracellular phosphatidylcholine (PtdCho), generating glycerophosphocholine (GroPtdCho). This deacylation occurs at both sn-2 and sn-1 positions of PtdCho. Its specific chemical modification by certain organophosphorus (OP) compounds leads to distal axonopathy. Plays a role in the signaling mechanism between neurons and glia that regulates glia wrapping during development of the adult brain. Essential for membrane lipid homeostasis and cell survival in both neurons and glia of the adult brain. The protein is Neuropathy target esterase sws of Drosophila willistoni (Fruit fly).